We begin with the raw amino-acid sequence, 391 residues long: ATP phosphoribosyltransferase regulatory subunit (391 aa).

This sequence belongs to the class-II aminoacyl-tRNA synthetase family. HisZ subfamily. Heteromultimer composed of HisG and HisZ subunits.

Its subcellular location is the cytoplasm. The protein operates within amino-acid biosynthesis; L-histidine biosynthesis; L-histidine from 5-phospho-alpha-D-ribose 1-diphosphate: step 1/9. Required for the first step of histidine biosynthesis. May allow the feedback regulation of ATP phosphoribosyltransferase activity by histidine. This is ATP phosphoribosyltransferase regulatory subunit from Clostridium kluyveri (strain ATCC 8527 / DSM 555 / NBRC 12016 / NCIMB 10680 / K1).